The sequence spans 256 residues: Imidazole glycerol phosphate synthase subunit HisF (256 aa).

Active-site residues include aspartate 12 and aspartate 131.

This sequence belongs to the HisA/HisF family. As to quaternary structure, heterodimer of HisH and HisF.

It localises to the cytoplasm. It catalyses the reaction 5-[(5-phospho-1-deoxy-D-ribulos-1-ylimino)methylamino]-1-(5-phospho-beta-D-ribosyl)imidazole-4-carboxamide + L-glutamine = D-erythro-1-(imidazol-4-yl)glycerol 3-phosphate + 5-amino-1-(5-phospho-beta-D-ribosyl)imidazole-4-carboxamide + L-glutamate + H(+). It functions in the pathway amino-acid biosynthesis; L-histidine biosynthesis; L-histidine from 5-phospho-alpha-D-ribose 1-diphosphate: step 5/9. In terms of biological role, IGPS catalyzes the conversion of PRFAR and glutamine to IGP, AICAR and glutamate. The HisF subunit catalyzes the cyclization activity that produces IGP and AICAR from PRFAR using the ammonia provided by the HisH subunit. This Pseudomonas paraeruginosa (strain DSM 24068 / PA7) (Pseudomonas aeruginosa (strain PA7)) protein is Imidazole glycerol phosphate synthase subunit HisF.